The chain runs to 192 residues: UPF0301 protein BTH_I1462 (192 aa).

Belongs to the UPF0301 (AlgH) family.

This Burkholderia thailandensis (strain ATCC 700388 / DSM 13276 / CCUG 48851 / CIP 106301 / E264) protein is UPF0301 protein BTH_I1462.